The primary structure comprises 268 residues: tRNA (guanine-N(1)-)-methyltransferase (268 aa).

S-adenosyl-L-methionine-binding positions include Gly110 and 129–134 (IGDFVM). Residues 246–268 (WGAPPAPVKRHRKRRPETTESAS) form a disordered region.

This sequence belongs to the RNA methyltransferase TrmD family. As to quaternary structure, homodimer.

It is found in the cytoplasm. It carries out the reaction guanosine(37) in tRNA + S-adenosyl-L-methionine = N(1)-methylguanosine(37) in tRNA + S-adenosyl-L-homocysteine + H(+). In terms of biological role, specifically methylates guanosine-37 in various tRNAs. In Deinococcus deserti (strain DSM 17065 / CIP 109153 / LMG 22923 / VCD115), this protein is tRNA (guanine-N(1)-)-methyltransferase.